A 313-amino-acid polypeptide reads, in one-letter code: Cytochrome c biogenesis protein CcsA (313 aa).

The next 8 membrane-spanning stretches (helical) occupy residues 9–29 (ILTH…LITL), 44–64 (GIIV…ISSG), 71–91 (LYES…IPYF), 101–121 (IIGP…LTEI), 143–163 (MILG…LLVI), 217–237 (VISL…VWAN), 244–264 (WNWD…AIYL), and 278–298 (AIVA…VNLL).

It belongs to the CcmF/CycK/Ccl1/NrfE/CcsA family. As to quaternary structure, may interact with Ccs1.

Its subcellular location is the plastid. The protein localises to the chloroplast thylakoid membrane. Required during biogenesis of c-type cytochromes (cytochrome c6 and cytochrome f) at the step of heme attachment. The polypeptide is Cytochrome c biogenesis protein CcsA (Nicotiana tomentosiformis (Tobacco)).